Reading from the N-terminus, the 194-residue chain is MTIKLIVGLANPGAEYAATRHNAGAWFVDLLAERLRAPLREEAKFFGYTSRVTLGGEDVRLLVPTTFMNLSGKAVAAMASFFRINPDEILVAHDELDLPPGVAKFKLGGGHGGHNGLKDIISKLGNNPNFHRLRIGIGHPGDKNKVVGFVLGKPPVSEQKLIDEAIDEAARCTEMWFTDGLTKATNRLHAFKAQ.

Tyr-16 is a tRNA binding site. Catalysis depends on His-21, which acts as the Proton acceptor. TRNA-binding residues include Phe-67, Asn-69, and Asn-115.

It belongs to the PTH family. In terms of assembly, monomer.

It localises to the cytoplasm. It catalyses the reaction an N-acyl-L-alpha-aminoacyl-tRNA + H2O = an N-acyl-L-amino acid + a tRNA + H(+). Hydrolyzes ribosome-free peptidyl-tRNAs (with 1 or more amino acids incorporated), which drop off the ribosome during protein synthesis, or as a result of ribosome stalling. In terms of biological role, catalyzes the release of premature peptidyl moieties from peptidyl-tRNA molecules trapped in stalled 50S ribosomal subunits, and thus maintains levels of free tRNAs and 50S ribosomes. This chain is Peptidyl-tRNA hydrolase, found in Escherichia coli O81 (strain ED1a).